The sequence spans 342 residues: Ribosomal RNA small subunit methyltransferase C (342 aa).

The protein belongs to the methyltransferase superfamily. RsmC family. Monomer.

It is found in the cytoplasm. The enzyme catalyses guanosine(1207) in 16S rRNA + S-adenosyl-L-methionine = N(2)-methylguanosine(1207) in 16S rRNA + S-adenosyl-L-homocysteine + H(+). Specifically methylates the guanine in position 1207 of 16S rRNA in the 30S particle. This chain is Ribosomal RNA small subunit methyltransferase C, found in Aeromonas hydrophila subsp. hydrophila (strain ATCC 7966 / DSM 30187 / BCRC 13018 / CCUG 14551 / JCM 1027 / KCTC 2358 / NCIMB 9240 / NCTC 8049).